The chain runs to 72 residues: Translation initiation factor IF-1 (72 aa).

An S1-like domain is found at 1 to 72; sequence MAKEDSIEMQ…SKGRIVFRSR (72 aa).

The protein belongs to the IF-1 family. Component of the 30S ribosomal translation pre-initiation complex which assembles on the 30S ribosome in the order IF-2 and IF-3, IF-1 and N-formylmethionyl-tRNA(fMet); mRNA recruitment can occur at any time during PIC assembly.

Its subcellular location is the cytoplasm. In terms of biological role, one of the essential components for the initiation of protein synthesis. Stabilizes the binding of IF-2 and IF-3 on the 30S subunit to which N-formylmethionyl-tRNA(fMet) subsequently binds. Helps modulate mRNA selection, yielding the 30S pre-initiation complex (PIC). Upon addition of the 50S ribosomal subunit IF-1, IF-2 and IF-3 are released leaving the mature 70S translation initiation complex. In Aeromonas hydrophila subsp. hydrophila (strain ATCC 7966 / DSM 30187 / BCRC 13018 / CCUG 14551 / JCM 1027 / KCTC 2358 / NCIMB 9240 / NCTC 8049), this protein is Translation initiation factor IF-1.